The following is a 269-amino-acid chain: Imidazoleglycerol-phosphate dehydratase 3, chloroplastic (269 aa).

The transit peptide at 1–51 directs the protein to the chloroplast; the sequence is MTTAPVVSPSLSRLHSAPASPFPKAPVGSGAGVAFPARPYGPSLRLRSAVM. Substrate is bound by residues E83, 109–117, 135–139, R161, and R183; these read HMLDQLASH and HHSNE. H109, H135, H136, and E139 together coordinate Mn(2+). Residues H207, H231, H232, and E235 each contribute to the Mn(2+) site. Substrate is bound by residues 231 to 239 and 261 to 263; these read HHIIEATFK and SSK.

It belongs to the imidazoleglycerol-phosphate dehydratase family. The cofactor is Mn(2+).

It localises to the plastid. Its subcellular location is the chloroplast. It carries out the reaction D-erythro-1-(imidazol-4-yl)glycerol 3-phosphate = 3-(imidazol-4-yl)-2-oxopropyl phosphate + H2O. It participates in amino-acid biosynthesis; L-histidine biosynthesis; L-histidine from 5-phospho-alpha-D-ribose 1-diphosphate: step 6/9. This chain is Imidazoleglycerol-phosphate dehydratase 3, chloroplastic, found in Triticum aestivum (Wheat).